The primary structure comprises 93 residues: Small ribosomal subunit protein bS18 (93 aa).

This sequence belongs to the bacterial ribosomal protein bS18 family. As to quaternary structure, part of the 30S ribosomal subunit. Forms a tight heterodimer with protein bS6.

Its function is as follows. Binds as a heterodimer with protein bS6 to the central domain of the 16S rRNA, where it helps stabilize the platform of the 30S subunit. The sequence is that of Small ribosomal subunit protein bS18 from Variovorax paradoxus (strain S110).